The sequence spans 872 residues: Alanine--tRNA ligase (872 aa).

Residues H563, H567, C665, and H669 each coordinate Zn(2+).

The protein belongs to the class-II aminoacyl-tRNA synthetase family. Zn(2+) is required as a cofactor.

It is found in the cytoplasm. The catalysed reaction is tRNA(Ala) + L-alanine + ATP = L-alanyl-tRNA(Ala) + AMP + diphosphate. Functionally, catalyzes the attachment of alanine to tRNA(Ala) in a two-step reaction: alanine is first activated by ATP to form Ala-AMP and then transferred to the acceptor end of tRNA(Ala). Also edits incorrectly charged Ser-tRNA(Ala) and Gly-tRNA(Ala) via its editing domain. The polypeptide is Alanine--tRNA ligase (Bacteroides fragilis (strain ATCC 25285 / DSM 2151 / CCUG 4856 / JCM 11019 / LMG 10263 / NCTC 9343 / Onslow / VPI 2553 / EN-2)).